Here is a 360-residue protein sequence, read N- to C-terminus: Serine/threonine-protein kinase SAPK4 (360 aa).

The 257-residue stretch at Tyr4–Phe260 folds into the Protein kinase domain. ATP is bound by residues Ile10–Ala18 and Lys33. Asp123 functions as the Proton acceptor in the catalytic mechanism. The segment at Thr303–Ile360 is disordered. Over residues Gly317–Glu339 the composition is skewed to acidic residues. Over residues Tyr340–Gly351 the composition is skewed to basic and acidic residues.

This sequence belongs to the protein kinase superfamily. Ser/Thr protein kinase family. In terms of processing, may be phosphorylated. In terms of tissue distribution, expressed in leaf blades, leaf sheaths and roots. Expressed in shoots and roots of young seedlings.

The catalysed reaction is L-seryl-[protein] + ATP = O-phospho-L-seryl-[protein] + ADP + H(+). The enzyme catalyses L-threonyl-[protein] + ATP = O-phospho-L-threonyl-[protein] + ADP + H(+). Activated by hyperosmotic stress. Its function is as follows. May play a role in signal transduction of hyperosmotic response. The chain is Serine/threonine-protein kinase SAPK4 (SAPK4) from Oryza sativa subsp. japonica (Rice).